Consider the following 217-residue polypeptide: Non-structural protein NS3 (217 aa).

The protein belongs to the orbivirus NS3 family.

Functionally, may play a role in the release of virions from infected cells. The chain is Non-structural protein NS3 (Segment-10) from African horse sickness virus (AHSV).